We begin with the raw amino-acid sequence, 32 residues long: Ovostatin (32 aa).

Residues 27-30 (CGEQ) constitute a cross-link (isoglutamyl cysteine thioester (Cys-Gln)).

It belongs to the protease inhibitor I39 (alpha-2-macroglobulin) family. In terms of assembly, homotetramer, which consists of two pairs of disulfide-linked chains.

The protein resides in the secreted. In terms of biological role, is able to inhibit all four classes of proteinases by a unique 'trapping' mechanism. This protein has a peptide stretch, called the 'bait region' which contains specific cleavage sites for different proteinases. When a proteinase cleaves the bait region, a conformational change is induced in the protein which traps the proteinase. The entrapped enzyme remains active against low molecular weight substrates (activity against high molecular weight substrates is greatly reduced). Following cleavage in the bait region a thioester bond is hydrolyzed and mediates the covalent binding of the protein to the proteinase. In Anas platyrhynchos (Mallard), this protein is Ovostatin.